The chain runs to 489 residues: Acetyl-coenzyme A carboxylase carboxyl transferase subunit beta, chloroplastic (489 aa).

One can recognise a CoA carboxyltransferase N-terminal domain in the interval 225–489 (LWIQCDNCYG…FFPLNKNEIK (265 aa)). Zn(2+) is bound by residues Cys229, Cys232, Cys245, and Cys248. A C4-type zinc finger spans residues 229–248 (CDNCYGLKYKKVEMNVCEEC).

This sequence belongs to the AccD/PCCB family. In terms of assembly, acetyl-CoA carboxylase is a heterohexamer composed of biotin carboxyl carrier protein, biotin carboxylase and 2 subunits each of ACCase subunit alpha and ACCase plastid-coded subunit beta (accD). The cofactor is Zn(2+).

It is found in the plastid. The protein localises to the chloroplast stroma. The enzyme catalyses N(6)-carboxybiotinyl-L-lysyl-[protein] + acetyl-CoA = N(6)-biotinyl-L-lysyl-[protein] + malonyl-CoA. It functions in the pathway lipid metabolism; malonyl-CoA biosynthesis; malonyl-CoA from acetyl-CoA: step 1/1. Functionally, component of the acetyl coenzyme A carboxylase (ACC) complex. Biotin carboxylase (BC) catalyzes the carboxylation of biotin on its carrier protein (BCCP) and then the CO(2) group is transferred by the transcarboxylase to acetyl-CoA to form malonyl-CoA. In Brassica napus (Rape), this protein is Acetyl-coenzyme A carboxylase carboxyl transferase subunit beta, chloroplastic.